An 818-amino-acid polypeptide reads, in one-letter code: ATM interactor (818 aa).

Low complexity predominate over residues 1 to 34 (MAATEAAAADSAGPAPGVPATPASTRGAAAASSP). The segment at 1–62 (MAATEAAAAD…RAAAPVPPAR (62 aa)) is disordered. A C2H2-type 1 zinc finger spans residues 80-105 (ILCTVRGCGKILPNSPALNMHLVKSH). A C2H2-type 2; degenerate zinc finger spans residues 161–181 (HKCSKCSNSYGTEWDLKRHEE). Over residues 210–221 (HEIPAEHRDPPS) the composition is skewed to basic and acidic residues. 2 disordered regions span residues 210–284 (HEIP…ATPP) and 603–625 (DNRSLLSDTNPGPDAQLPAGSAQ). The interval 219-437 (PPSKKRKMES…PDSSVSSCSQ (219 aa)) is required for formation of RAD51 foci. Composition is skewed to polar residues over residues 229–243 (YLQNQKLSSKTTEPL) and 603–612 (DNRSLLSDTN).

As to quaternary structure, interacts via its C-terminus with ATM. Interacts with DYNLL; this interaction inhibits ATMIN transcriptional activity and hence may play a role in a feedback loop whereby DYNLL1 inhibits transactivation of its own promoter by ATMIN. ATMIN.

Its subcellular location is the nucleus. Functionally, transcription factor. Plays a crucial role in cell survival and RAD51 foci formation in response to methylating DNA damage. Involved in regulating the activity of ATM in the absence of DNA damage. May play a role in stabilizing ATM. Binds to the DYNLL1 promoter and activates its transcription. The sequence is that of ATM interactor from Mus musculus (Mouse).